The following is a 579-amino-acid chain: Proteasome-associated ATPase (579 aa).

The disordered stretch occupies residues Met-1–Glu-21. Positions Glu-8–Pro-86 form a coiled coil. Gly-268–Leu-273 is a binding site for ATP. Residues Tyr-578–Leu-579 form a docks into pockets in the proteasome alpha-ring region.

The protein belongs to the AAA ATPase family. In terms of assembly, homohexamer. Assembles into a hexameric ring structure that caps the 20S proteasome core. Strongly interacts with the prokaryotic ubiquitin-like protein Pup through a hydrophobic interface; the interacting region of ARC lies in its N-terminal coiled-coil domain. There is one Pup binding site per ARC hexamer ring. Upon ATP-binding, the C-terminus of ARC interacts with the alpha-rings of the proteasome core, possibly by binding to the intersubunit pockets.

The protein operates within protein degradation; proteasomal Pup-dependent pathway. Its function is as follows. ATPase which is responsible for recognizing, binding, unfolding and translocation of pupylated proteins into the bacterial 20S proteasome core particle. May be essential for opening the gate of the 20S proteasome via an interaction with its C-terminus, thereby allowing substrate entry and access to the site of proteolysis. Thus, the C-termini of the proteasomal ATPase may function like a 'key in a lock' to induce gate opening and therefore regulate proteolysis. In Acidimicrobium ferrooxidans (strain DSM 10331 / JCM 15462 / NBRC 103882 / ICP), this protein is Proteasome-associated ATPase.